The sequence spans 225 residues: Futalosine hydrolase (225 aa).

It belongs to the PNP/UDP phosphorylase family. Futalosine hydrolase subfamily. In terms of assembly, homotetramer.

It catalyses the reaction futalosine + H2O = dehypoxanthine futalosine + hypoxanthine. Its pathway is quinol/quinone metabolism; menaquinone biosynthesis. No enhancing of inhibitory effects are observed with divalent metal ions. Slightly inhibited by hypoxanthine. Its function is as follows. Catalyzes the hydrolysis of futalosine (FL) to dehypoxanthine futalosine (DHFL) and hypoxanthine, a step in the biosynthesis of menaquinone (MK, vitamin K2). Is highly specific to futalosine since it does not accept aminodeoxyfutalosine (AFL), or any structurally related nucleotides and nucleosides as substrate. This Thermus thermophilus (strain ATCC 27634 / DSM 579 / HB8) protein is Futalosine hydrolase.